The chain runs to 189 residues: HGPRTase-like protein 2 (189 aa).

This sequence belongs to the purine/pyrimidine phosphoribosyltransferase family. Archaeal HPRT subfamily.

Its function is as follows. May catalyze a purine salvage reaction, the substrate is unknown. This chain is HGPRTase-like protein 2, found in Halalkalicoccus jeotgali (strain DSM 18796 / CECT 7217 / JCM 14584 / KCTC 4019 / B3).